The primary structure comprises 546 residues: High-affinity glucose transporter ght5 (546 aa).

At 1–9 (MGKNLTIVM) the chain is on the cytoplasmic side. Residues 10-30 (LVFVSMAGWMFGADTGSIGGI) form a helical membrane-spanning segment. Residues 31-58 (TNMRDFQSRFADRYNPVTDSYSYSSARQ) are Extracellular-facing. A helical membrane pass occupies residues 59 to 79 (GLITGMVNVGSFFGCFLSSPL). Over 80–87 (MDRIGKRT) the chain is Cytoplasmic. Residues 88–108 (SIMFWTIVYLIGIILQVTAVP) form a helical membrane-spanning segment. Residues 109–112 (SWVQ) are Extracellular-facing. A helical membrane pass occupies residues 113–133 (IMVAKIWTGLSIGALSVLAPG). Residues 134–144 (FQSEVAPADLR) lie on the Cytoplasmic side of the membrane. Residues 145 to 165 (GTIVTTYQLAVTGGIFIAACI) traverse the membrane as a helical segment. At 166–179 (NMGTHKLHKTAQWR) the chain is on the extracellular side. Residues 180–200 (VSMGINLLWGIITFIGISFLP) form a helical membrane-spanning segment. Topologically, residues 201 to 266 (ESPRYLISVG…IFGPDIRYRT (66 aa)) are cytoplasmic. The helical transmembrane segment at 267 to 285 (FLGLGVMSLQQLTGDNYYF) threads the bilayer. The Extracellular portion of the chain corresponds to 286 to 301 (YYGFEVFEGTGMNSPY). Residues 302–322 (LSALILDAVNFGCTFGGLFVL) traverse the membrane as a helical segment. The Cytoplasmic portion of the chain corresponds to 323-328 (EFFGRR). A helical membrane pass occupies residues 329 to 349 (MPLIIGALWQSITFFIYAAVG). At 350–363 (NRALTRKNGTSNHR) the chain is on the extracellular side. Asparagine 357 carries an N-linked (GlcNAc...) asparagine glycan. Residues 364 to 384 (AGAVMIVFSCLFIFSFAQTWG) traverse the membrane as a helical segment. At 385–404 (PAAYVIVGESYPIRYRSKCA) the chain is on the cytoplasmic side. Residues 405-425 (AVATTGNWLWGFLISFFTPFI) form a helical membrane-spanning segment. Residues 426–432 (TNSIGFK) are Extracellular-facing. The helical transmembrane segment at 433–453 (YGYIFAACNLCAACIIFLFAH) threads the bilayer. Residues 454 to 546 (ETKGLTLEEI…SYHDQEEQFA (93 aa)) are Cytoplasmic-facing. The interval 486–546 (KQQEEVREKS…SYHDQEEQFA (61 aa)) is disordered. Over residues 487 to 496 (QQEEVREKSR) the composition is skewed to basic and acidic residues. Over residues 509–519 (VDGEEGIEDSS) the composition is skewed to acidic residues. The segment covering 520 to 529 (NDISSTTSSD) has biased composition (low complexity). Residues serine 528 and serine 537 each carry the phosphoserine modification. The segment covering 530 to 546 (GRAKPESSYHDQEEQFA) has biased composition (basic and acidic residues).

It belongs to the major facilitator superfamily. Sugar transporter (TC 2.A.1.1) family.

The protein localises to the membrane. In terms of biological role, high-affinity glucose transporter. The sequence is that of High-affinity glucose transporter ght5 (ght5) from Schizosaccharomyces pombe (strain 972 / ATCC 24843) (Fission yeast).